The chain runs to 968 residues: A disintegrin and metalloproteinase with thrombospondin motifs 1 (968 aa).

2 disordered regions span residues 1–23 (MQPK…DVQR) and 177–253 (APAV…RKKR). Positions 1 to 48 (MQPKVPLGSRKQKPCSDMGDVQRAARSRGSLSAHMLLLLLASITMLLC) are cleaved as a signal peptide. Positions 49 to 253 (ARGAHGRPTE…SGPGSIRKKR (205 aa)) are excised as a propeptide. The Cysteine switch signature appears at 204 to 211 (AKCGVMDD). A Zn(2+)-binding site is contributed by cysteine 206. The segment covering 214-229 (LPTSDSRPESQNTRNQ) has biased composition (polar residues). A Peptidase M12B domain is found at 259–468 (RYVETMLVAD…GHGECLMDKP (210 aa)). Ca(2+)-binding residues include glutamate 262, aspartate 345, and aspartate 352. 4 disulfides stabilise this stretch: cysteine 334/cysteine 386, cysteine 363/cysteine 368, cysteine 380/cysteine 463, and cysteine 418/cysteine 447. Histidine 402 is a binding site for Zn(2+). Glutamate 403 is a catalytic residue. Histidine 406 and histidine 412 together coordinate Zn(2+). Cysteine 463 and aspartate 466 together coordinate Ca(2+). The region spanning 477–559 (DLPGTLYDAN…TDMKHFATPV (83 aa)) is the Disintegrin domain. 4 disulfide bridges follow: cysteine 489-cysteine 512, cysteine 500-cysteine 522, cysteine 507-cysteine 541, and cysteine 535-cysteine 546. Asparagine 548 is a glycosylation site (N-linked (GlcNAc...) asparagine). The TSP type-1 1 domain occupies 560–615 (HGSWGPWGPWGDCSRTCGGGVQYTMRECDNPVPKNGGKYCEGKRVRYRSCNIEDCP). Intrachain disulfides connect cysteine 572/cysteine 609, cysteine 576/cysteine 614, and cysteine 587/cysteine 599. Asparagine 721, asparagine 765, and asparagine 783 each carry an N-linked (GlcNAc...) asparagine glycan. The segment at 726–850 (KKMSGIVTST…YFMKKKTESF (125 aa)) is spacer. 2 consecutive TSP type-1 domains span residues 855–911 (TFSE…LPCP) and 912–968 (HWQV…TQCS). An N-linked (GlcNAc...) asparagine glycan is attached at asparagine 946.

Zn(2+) is required as a cofactor. In terms of processing, the precursor is cleaved by a furin endopeptidase. Post-translationally, glycosylated. Can be O-fucosylated by POFUT2 on a serine or a threonine residue found within the consensus sequence C1-X(2)-(S/T)-C2-G of the TSP type-1 repeat domains where C1 and C2 are the first and second cysteine residue of the repeat, respectively. Fucosylated repeats can then be further glycosylated by the addition of a beta-1,3-glucose residue by the glucosyltransferase, B3GALTL. Fucosylation mediates the efficient secretion of ADAMTS family members. Can also be C-glycosylated with one or two mannose molecules on tryptophan residues within the consensus sequence W-X-X-W of the TPRs, and N-glycosylated. These other glycosylations can also facilitate secretion.

The protein localises to the secreted. The protein resides in the extracellular space. Its subcellular location is the extracellular matrix. Metalloprotease which cleaves aggrecan, a cartilage proteoglycan, at the '1691-Glu-|-Leu-1692' site (within the chondroitin sulfate attachment domain), and may be involved in its turnover. Also cleaves COMP. Has angiogenic inhibitor activity. May play a critical role in follicular rupture. In Mus musculus (Mouse), this protein is A disintegrin and metalloproteinase with thrombospondin motifs 1 (Adamts1).